We begin with the raw amino-acid sequence, 185 residues long: Large ribosomal subunit protein uL5 (185 aa).

This sequence belongs to the universal ribosomal protein uL5 family. As to quaternary structure, part of the 50S ribosomal subunit; part of the 5S rRNA/L5/L18/L25 subcomplex. Contacts the 5S rRNA and the P site tRNA. Forms a bridge to the 30S subunit in the 70S ribosome.

Its function is as follows. This is one of the proteins that bind and probably mediate the attachment of the 5S RNA into the large ribosomal subunit, where it forms part of the central protuberance. In the 70S ribosome it contacts protein S13 of the 30S subunit (bridge B1b), connecting the 2 subunits; this bridge is implicated in subunit movement. Contacts the P site tRNA; the 5S rRNA and some of its associated proteins might help stabilize positioning of ribosome-bound tRNAs. In Brucella abortus (strain S19), this protein is Large ribosomal subunit protein uL5.